The chain runs to 317 residues: tRNA dimethylallyltransferase (317 aa).

Residue 14–21 (GPTAVGKT) coordinates ATP. 16–21 (TAVGKT) serves as a coordination point for substrate. The segment at 39–42 (DSMQ) is interaction with substrate tRNA.

It belongs to the IPP transferase family. As to quaternary structure, monomer. The cofactor is Mg(2+).

The catalysed reaction is adenosine(37) in tRNA + dimethylallyl diphosphate = N(6)-dimethylallyladenosine(37) in tRNA + diphosphate. Functionally, catalyzes the transfer of a dimethylallyl group onto the adenine at position 37 in tRNAs that read codons beginning with uridine, leading to the formation of N6-(dimethylallyl)adenosine (i(6)A). In Bacillus cereus (strain Q1), this protein is tRNA dimethylallyltransferase.